Consider the following 339-residue polypeptide: Fructose-1,6-bisphosphatase isozyme 2 (339 aa).

Residues 3–10 form an important for interaction with ALDOA region; it reads DRSPFETD. AMP-binding positions include V18 and 28-32; that span reads TGELT. The Mg(2+) site is built by D69 and E98. Position 113-114 (113-114) interacts with AMP; it reads KY. Mg(2+) is bound by residues D119, L121, and D122. Residue D122 coordinates substrate. Residue R141 coordinates AMP. The Nuclear localization signal signature appears at 204 to 208; the sequence is KKKGK. A substrate-binding site is contributed by 213 to 216; the sequence is NEGY. Y216 and Y219 each carry phosphotyrosine. Substrate-binding positions include 245 to 249, Y265, and K275; that span reads YVGSM. E281 lines the Mg(2+) pocket.

It belongs to the FBPase class 1 family. In terms of assembly, homotetramer. Interacts with ALDOA; the interaction blocks inhibition by physiological concentrations of AMP and reduces inhibition by Ca(2+). Interacts with alpha-actinin and F-actin. Mg(2+) serves as cofactor.

The protein localises to the cell junction. Its subcellular location is the cytoplasm. It localises to the nucleus. It is found in the myofibril. The protein resides in the sarcomere. The protein localises to the z line. It carries out the reaction beta-D-fructose 1,6-bisphosphate + H2O = beta-D-fructose 6-phosphate + phosphate. It participates in carbohydrate biosynthesis; gluconeogenesis. With respect to regulation, subject to complex allosteric regulation. The enzyme can assume an active R-state, or an inactive T-state. Intermediate conformations may exist. AMP acts as an allosteric inhibitor. Fructose 2,6-bisphosphate acts as a competitive inhibitor. Strongly inhibited by Ca(2+). Its function is as follows. Catalyzes the hydrolysis of fructose 1,6-bisphosphate to fructose 6-phosphate in the presence of divalent cations and probably participates in glycogen synthesis from carbohydrate precursors, such as lactate. The chain is Fructose-1,6-bisphosphatase isozyme 2 (FBP2) from Oryctolagus cuniculus (Rabbit).